Consider the following 378-residue polypeptide: tRNA (guanine(26)-N(2))-dimethyltransferase (378 aa).

Residues Lys4–Val374 form the Trm1 methyltransferase domain. Positions 44, 69, 87, 114, and 115 each coordinate S-adenosyl-L-methionine. Cys246, Cys249, Cys263, and Cys266 together coordinate Zn(2+).

The protein belongs to the class I-like SAM-binding methyltransferase superfamily. Trm1 family.

It catalyses the reaction guanosine(26) in tRNA + 2 S-adenosyl-L-methionine = N(2)-dimethylguanosine(26) in tRNA + 2 S-adenosyl-L-homocysteine + 2 H(+). In terms of biological role, dimethylates a single guanine residue at position 26 of a number of tRNAs using S-adenosyl-L-methionine as donor of the methyl groups. This is tRNA (guanine(26)-N(2))-dimethyltransferase from Saccharolobus islandicus (strain L.S.2.15 / Lassen #1) (Sulfolobus islandicus).